Here is a 197-residue protein sequence, read N- to C-terminus: dTTP/UTP pyrophosphatase (197 aa).

The active-site Proton acceptor is Asp-70.

The protein belongs to the Maf family. YhdE subfamily. Requires a divalent metal cation as cofactor.

It localises to the cytoplasm. The enzyme catalyses dTTP + H2O = dTMP + diphosphate + H(+). It catalyses the reaction UTP + H2O = UMP + diphosphate + H(+). Functionally, nucleoside triphosphate pyrophosphatase that hydrolyzes dTTP and UTP. May have a dual role in cell division arrest and in preventing the incorporation of modified nucleotides into cellular nucleic acids. In Yersinia pestis bv. Antiqua (strain Antiqua), this protein is dTTP/UTP pyrophosphatase.